Consider the following 196-residue polypeptide: ATP-dependent Clp protease proteolytic subunit (196 aa).

Ser-99 functions as the Nucleophile in the catalytic mechanism. The active site involves His-124.

The protein belongs to the peptidase S14 family. Fourteen ClpP subunits assemble into 2 heptameric rings which stack back to back to give a disk-like structure with a central cavity, resembling the structure of eukaryotic proteasomes.

It localises to the cytoplasm. The catalysed reaction is Hydrolysis of proteins to small peptides in the presence of ATP and magnesium. alpha-casein is the usual test substrate. In the absence of ATP, only oligopeptides shorter than five residues are hydrolyzed (such as succinyl-Leu-Tyr-|-NHMec, and Leu-Tyr-Leu-|-Tyr-Trp, in which cleavage of the -Tyr-|-Leu- and -Tyr-|-Trp bonds also occurs).. Functionally, cleaves peptides in various proteins in a process that requires ATP hydrolysis. Has a chymotrypsin-like activity. Plays a major role in the degradation of misfolded proteins. This is ATP-dependent Clp protease proteolytic subunit from Helicobacter pylori (strain ATCC 700392 / 26695) (Campylobacter pylori).